The sequence spans 266 residues: Thiazole synthase (266 aa).

K95 (schiff-base intermediate with DXP) is an active-site residue. 1-deoxy-D-xylulose 5-phosphate is bound by residues G156, 182-183, and 204-205; these read AG and NT.

This sequence belongs to the ThiG family. In terms of assembly, homotetramer. Forms heterodimers with either ThiH or ThiS.

The protein localises to the cytoplasm. It carries out the reaction [ThiS sulfur-carrier protein]-C-terminal-Gly-aminoethanethioate + 2-iminoacetate + 1-deoxy-D-xylulose 5-phosphate = [ThiS sulfur-carrier protein]-C-terminal Gly-Gly + 2-[(2R,5Z)-2-carboxy-4-methylthiazol-5(2H)-ylidene]ethyl phosphate + 2 H2O + H(+). The protein operates within cofactor biosynthesis; thiamine diphosphate biosynthesis. Catalyzes the rearrangement of 1-deoxy-D-xylulose 5-phosphate (DXP) to produce the thiazole phosphate moiety of thiamine. Sulfur is provided by the thiocarboxylate moiety of the carrier protein ThiS. In vitro, sulfur can be provided by H(2)S. In Shewanella denitrificans (strain OS217 / ATCC BAA-1090 / DSM 15013), this protein is Thiazole synthase.